The chain runs to 594 residues: DNA polymerase II small subunit (594 aa).

It belongs to the DNA polymerase delta/II small subunit family. Heterodimer of a large subunit and a small subunit.

The enzyme catalyses DNA(n) + a 2'-deoxyribonucleoside 5'-triphosphate = DNA(n+1) + diphosphate. It carries out the reaction Exonucleolytic cleavage in the 3'- to 5'-direction to yield nucleoside 5'-phosphates.. Possesses two activities: a DNA synthesis (polymerase) and an exonucleolytic activity that degrades single-stranded DNA in the 3' to 5' direction. Has a template-primer preference which is characteristic of a replicative DNA polymerase. The sequence is that of DNA polymerase II small subunit (polB) from Methanocaldococcus jannaschii (strain ATCC 43067 / DSM 2661 / JAL-1 / JCM 10045 / NBRC 100440) (Methanococcus jannaschii).